Consider the following 654-residue polypeptide: Carboxypeptidase Z (654 aa).

Positions 1–20 (MPTMPLLLAALAALAVLALA) are cleaved as a signal peptide. An FZ domain is found at 43 to 165 (THSATCVDLH…APEEEGCYDP (123 aa)). Intrachain disulfides connect Cys-48–Cys-114, Cys-56–Cys-107, Cys-98–Cys-134, Cys-123–Cys-162, and Cys-127–Cys-151. N-linked (GlcNAc...) asparagine glycosylation occurs at Asn-62. One can recognise a Peptidase M14 domain in the interval 191–507 (AHHSYAQMVR…EPLLNFLEMV (317 aa)). Zn(2+) is bound by residues His-253 and Glu-256. The N-linked (GlcNAc...) asparagine glycan is linked to Asn-286. His-385 lines the Zn(2+) pocket. Residue Glu-477 is the Proton donor/acceptor of the active site. Residues 596-630 (FLPGPSRALPRFQDPQREPTQMDFEPPRARRQPAS) are disordered.

The protein belongs to the peptidase M14 family. The cofactor is Zn(2+).

The protein localises to the secreted. It is found in the extracellular space. Its subcellular location is the extracellular matrix. Its activity is regulated as follows. Inhibited by 2-mercaptomethyl-3-guanidinoethylthiopropanoic acid (MGTA) and guanidinoethylmercaptosuccinic acid (GEMSA). Inhibited by chelating agents such as EDTA and EGTA. Its function is as follows. Cleaves substrates with C-terminal arginine residues. Probably modulates the Wnt signaling pathway, by cleaving some undefined protein. May play a role in cleavage during prohormone processing. In Mus musculus (Mouse), this protein is Carboxypeptidase Z (Cpz).